We begin with the raw amino-acid sequence, 284 residues long: Spermidine/putrescine transport system permease protein PotC homolog (284 aa).

The next 6 membrane-spanning stretches (helical) occupy residues Y13–L33, I76–A96, L116–L136, G143–I163, F189–F209, and A242–I262. The ABC transmembrane type-1 domain maps to L72–T263.

It belongs to the binding-protein-dependent transport system permease family. CysTW subfamily.

It localises to the cell membrane. Functionally, required for the activity of the bacterial transport system of putrescine and spermidine. The sequence is that of Spermidine/putrescine transport system permease protein PotC homolog (potC) from Mycoplasma genitalium (strain ATCC 33530 / DSM 19775 / NCTC 10195 / G37) (Mycoplasmoides genitalium).